Consider the following 833-residue polypeptide: Leucine--tRNA ligase (833 aa).

The 'HIGH' region signature appears at 41 to 52 (PYPSGAGLHVGH). The 'KMSKS' region signature appears at 610–614 (KMSKS). Lys613 is an ATP binding site.

The protein belongs to the class-I aminoacyl-tRNA synthetase family.

It is found in the cytoplasm. The catalysed reaction is tRNA(Leu) + L-leucine + ATP = L-leucyl-tRNA(Leu) + AMP + diphosphate. The sequence is that of Leucine--tRNA ligase from Streptococcus equi subsp. equi (strain 4047).